Reading from the N-terminus, the 418-residue chain is Hydroxysteroid dehydrogenase-like protein 2 (418 aa).

Residues 17-23, lysine 42, and aspartate 74 contribute to the NADP(+) site; that span reads GASRGIG. Position 42 is an N6-(2-hydroxyisobutyryl)lysine (lysine 42). N6-acetyllysine is present on lysine 116. Tyrosine 168 serves as the catalytic Proton acceptor. Lysine 172 contributes to the NADP(+) binding site. A disordered region spans residues 287 to 310; it reads STGAVPEFKEEKPQPQPKPRSGAV. The 110-residue stretch at 306 to 415 folds into the SCP2 domain; sequence RSGAVEETFR…KLEKLMNQMN (110 aa). Position 318 is an N6-succinyllysine (lysine 318).

The protein belongs to the short-chain dehydrogenases/reductases (SDR) family.

The protein resides in the peroxisome. It localises to the mitochondrion. In terms of biological role, has apparently no steroid dehydrogenase activity. Controls bile acid (BA) and lipid metabolism in response to nutritional cues. This Pongo abelii (Sumatran orangutan) protein is Hydroxysteroid dehydrogenase-like protein 2 (HSDL2).